We begin with the raw amino-acid sequence, 156 residues long: Ecotin (156 aa).

The N-terminal stretch at 1 to 19 is a signal peptide; that stretch reads MKALLIAAGVAALSSTAMA. Cys-65 and Cys-102 form a disulfide bridge.

The protein belongs to the protease inhibitor I11 (ecotin) family. Homodimer.

It localises to the periplasm. Its function is as follows. General inhibitor of family S1 serine proteases. This Pseudomonas aeruginosa (strain LESB58) protein is Ecotin.